The chain runs to 80 residues: Trefoil factor 3 (80 aa).

An N-terminal signal peptide occupies residues 1–21 (MEARVLWLLALVLALGSSSLA). The P-type domain occupies 30–73 (NLCAVPAKNRVDCGYPEISPEQCVNRGCCFDSSIPEVPWCFKPL). Cystine bridges form between C32-C58, C42-C57, and C52-C69.

In terms of assembly, monomer. Homodimer; disulfide-linked.

The protein localises to the secreted. Its subcellular location is the extracellular space. It localises to the extracellular matrix. The protein resides in the cytoplasm. Involved in the maintenance and repair of the intestinal mucosa. Promotes the mobility of epithelial cells in healing processes (motogen). This is Trefoil factor 3 (TFF3) from Felis catus (Cat).